Consider the following 1356-residue polypeptide: Kinesin-like protein KIF24 (1356 aa).

In terms of domain architecture, SAM spans 1-64 (MASWLYECLC…FQLIKIIKIM (64 aa)). Positions 93 to 119 (GPRRQLHFDSPSASKDKMANNETGSLS) are disordered. Residue Ser-102 is modified to Phosphoserine. Residues 218 to 541 (KIRVCVRKRP…LRYADRVKEL (324 aa)) form the Kinesin motor domain. 308–315 (GQTGAGKT) contacts ATP. At Ser-473 the chain carries Phosphoserine. The interaction with MPHOSPH9 stretch occupies residues 473–702 (SLLALKECIR…PTRGKKVQPV (230 aa)). The span at 552–571 (TSQNQTSANASPKRIQSSPV) shows a compositional bias: polar residues. Disordered regions lie at residues 552–581 (TSQN…CSPK), 597–664 (PTKV…LCSE), 788–840 (EGRL…STAL), 897–947 (RGAL…HQKP), and 964–998 (VPEQ…DQRD). Ser-579 is modified (phosphoserine). Thr-615 is subject to Phosphothreonine; by NEK2. Ser-616 bears the Phosphoserine; by NEK2 mark. Ser-640, Ser-817, and Ser-820 each carry phosphoserine. Positions 640-653 (SPRKGTTRSGHSIK) are enriched in basic residues. Residues 810–821 (QAEDLDDSDFSE) are compositionally biased toward acidic residues. The span at 830-840 (QPAMKQGSTAL) shows a compositional bias: polar residues. Residues 970 to 979 (GSLSSPSPEN) show a composition bias toward polar residues. A Phosphoserine modification is found at Ser-1008. The tract at residues 1109 to 1140 (LSSSPPDNRPSGDLPALSPSPIHQHSPDKLPG) is disordered.

Belongs to the TRAFAC class myosin-kinesin ATPase superfamily. Kinesin family. In terms of assembly, interacts with CCP110, CEP97, TALPID3. Interacts with MPHOSPH9. In terms of tissue distribution, expressed in brain, spinal cord, and small intestine.

Its subcellular location is the cytoplasm. It is found in the cytoskeleton. The protein localises to the microtubule organizing center. The protein resides in the centrosome. It localises to the centriole. Microtubule-dependent motor protein that acts as a negative regulator of ciliogenesis by mediating recruitment of CCP110 to mother centriole in cycling cells, leading to restrict nucleation of cilia at centrioles. Mediates depolymerization of microtubules of centriolar origin, possibly to suppress aberrant cilia formation. Following activation by NEK2 involved in disassembly of primary cilium during G2/M phase but does not disassemble fully formed ciliary axonemes. As cilium assembly and disassembly is proposed to coexist in a dynamic equilibrium may suppress nascent cilium assembly and, potentially, ciliar re-assembly in cells that have already disassembled their cilia ensuring the completion of cilium removal in the later stages of the cell cycle. Plays an important role in recruiting MPHOSPH9, a negative regulator of cilia formation to the distal end of mother centriole. The sequence is that of Kinesin-like protein KIF24 (Kif24) from Mus musculus (Mouse).